An 841-amino-acid polypeptide reads, in one-letter code: Alpha-glucuronidase A (841 aa).

A signal peptide spans Met1–Ala20. N-linked (GlcNAc...) asparagine glycosylation is found at Asn51, Asn76, Asn149, Asn222, Asn279, Asn310, Asn343, Asn450, Asn465, Asn527, Asn576, Asn682, Asn723, and Asn732.

It belongs to the glycosyl hydrolase 67 family.

The protein resides in the secreted. The catalysed reaction is an alpha-D-glucuronoside + H2O = D-glucuronate + an alcohol. Alpha-glucuronidase involved in the hydrolysis of xylan, a major structural heterogeneous polysaccharide found in plant biomass representing the second most abundant polysaccharide in the biosphere, after cellulose. Releases 4-O-methylglucuronic acid from xylan. This Aspergillus tubingensis protein is Alpha-glucuronidase A (aguA).